Consider the following 563-residue polypeptide: NAD-dependent malic enzyme (563 aa).

Catalysis depends on Tyr101, which acts as the Proton donor. NAD(+) is bound at residue Arg154. Catalysis depends on Lys172, which acts as the Proton acceptor. A divalent metal cation-binding residues include Glu243, Asp244, and Asp267. NAD(+) is bound by residues Asp267 and Asn416.

Belongs to the malic enzymes family. As to quaternary structure, homotetramer. Mg(2+) is required as a cofactor. It depends on Mn(2+) as a cofactor.

It catalyses the reaction (S)-malate + NAD(+) = pyruvate + CO2 + NADH. The catalysed reaction is oxaloacetate + H(+) = pyruvate + CO2. The polypeptide is NAD-dependent malic enzyme (Pseudomonas syringae pv. syringae (strain B728a)).